The chain runs to 86 residues: uncharacterized protein (86 aa).

This is an uncharacterized protein from Helicobacter pylori (strain J99 / ATCC 700824) (Campylobacter pylori J99).